The following is a 367-amino-acid chain: Queuine tRNA-ribosyltransferase (367 aa).

Asp-92 functions as the Proton acceptor in the catalytic mechanism. Residues Asp-92–Phe-96, Asp-146, Gln-188, and Gly-215 each bind substrate. Residues Gly-246–Asp-252 form an RNA binding region. Catalysis depends on Asp-265, which acts as the Nucleophile. Zn(2+) is bound by residues Cys-303, Cys-305, Cys-308, and His-334.

Belongs to the queuine tRNA-ribosyltransferase family. In terms of assembly, homodimer. Within each dimer, one monomer is responsible for RNA recognition and catalysis, while the other monomer binds to the replacement base PreQ1. Zn(2+) is required as a cofactor.

It carries out the reaction 7-aminomethyl-7-carbaguanine + guanosine(34) in tRNA = 7-aminomethyl-7-carbaguanosine(34) in tRNA + guanine. Its pathway is tRNA modification; tRNA-queuosine biosynthesis. Functionally, catalyzes the base-exchange of a guanine (G) residue with the queuine precursor 7-aminomethyl-7-deazaguanine (PreQ1) at position 34 (anticodon wobble position) in tRNAs with GU(N) anticodons (tRNA-Asp, -Asn, -His and -Tyr). Catalysis occurs through a double-displacement mechanism. The nucleophile active site attacks the C1' of nucleotide 34 to detach the guanine base from the RNA, forming a covalent enzyme-RNA intermediate. The proton acceptor active site deprotonates the incoming PreQ1, allowing a nucleophilic attack on the C1' of the ribose to form the product. After dissociation, two additional enzymatic reactions on the tRNA convert PreQ1 to queuine (Q), resulting in the hypermodified nucleoside queuosine (7-(((4,5-cis-dihydroxy-2-cyclopenten-1-yl)amino)methyl)-7-deazaguanosine). The sequence is that of Queuine tRNA-ribosyltransferase from Francisella tularensis subsp. tularensis (strain FSC 198).